Here is a 300-residue protein sequence, read N- to C-terminus: tRNA pseudouridine synthase B (300 aa).

The active-site Nucleophile is D38.

Belongs to the pseudouridine synthase TruB family. Type 1 subfamily.

The enzyme catalyses uridine(55) in tRNA = pseudouridine(55) in tRNA. In terms of biological role, responsible for synthesis of pseudouridine from uracil-55 in the psi GC loop of transfer RNAs. The chain is tRNA pseudouridine synthase B from Dehalococcoides mccartyi (strain ATCC BAA-2266 / KCTC 15142 / 195) (Dehalococcoides ethenogenes (strain 195)).